The primary structure comprises 571 residues: Dihydroxy-acid dehydratase (571 aa).

Residue cysteine 56 participates in [2Fe-2S] cluster binding. Aspartate 88 is a binding site for Mg(2+). Cysteine 129 contributes to the [2Fe-2S] cluster binding site. Residues aspartate 130 and lysine 131 each contribute to the Mg(2+) site. N6-carboxylysine is present on lysine 131. Cysteine 201 provides a ligand contact to [2Fe-2S] cluster. Glutamate 452 is a Mg(2+) binding site. Serine 478 (proton acceptor) is an active-site residue.

It belongs to the IlvD/Edd family. Homodimer. Requires [2Fe-2S] cluster as cofactor. Mg(2+) serves as cofactor.

The catalysed reaction is (2R)-2,3-dihydroxy-3-methylbutanoate = 3-methyl-2-oxobutanoate + H2O. It carries out the reaction (2R,3R)-2,3-dihydroxy-3-methylpentanoate = (S)-3-methyl-2-oxopentanoate + H2O. It participates in amino-acid biosynthesis; L-isoleucine biosynthesis; L-isoleucine from 2-oxobutanoate: step 3/4. Its pathway is amino-acid biosynthesis; L-valine biosynthesis; L-valine from pyruvate: step 3/4. Its function is as follows. Functions in the biosynthesis of branched-chain amino acids. Catalyzes the dehydration of (2R,3R)-2,3-dihydroxy-3-methylpentanoate (2,3-dihydroxy-3-methylvalerate) into 2-oxo-3-methylpentanoate (2-oxo-3-methylvalerate) and of (2R)-2,3-dihydroxy-3-methylbutanoate (2,3-dihydroxyisovalerate) into 2-oxo-3-methylbutanoate (2-oxoisovalerate), the penultimate precursor to L-isoleucine and L-valine, respectively. This chain is Dihydroxy-acid dehydratase, found in Streptococcus mutans serotype c (strain ATCC 700610 / UA159).